The chain runs to 360 residues: MDKYEVVKDLGAGNFGVARLLRHKETKELVAMKYIERGRKIDENVAREIINHRSLRHPNIIRFKEVILTPTHLAIVMEYASGGELFERICNAGRFSEAEARYFFQQLICGVDYCHSLQICHRDLKLENTLLDGSPAPLLKICDFGYSKSSLLHSRPKSTVGTPAYIAPEVLSRREYDGKHADVWSCGVTLYVMLVGGYPFEDPDDPRNFRKTIQRIMAVQYKIPDYVHISQECRHLLSRIFVTNSAKRITLKEIKKHPWYLKNLPKELTEPAQAAYYKRETPSFSLQSVEDIMKIVGEARNPAPSSNAVKGFDDDEEDVEDEVEEEEEEEEEEEEEEEEEEDEYEKHVKEAHSCQEPPKA.

The region spanning 4–260 is the Protein kinase domain; sequence YEVVKDLGAG…LKEIKKHPWY (257 aa). ATP contacts are provided by residues 10 to 18 and K33; that span reads LGAGNFGVA. Catalysis depends on D123, which acts as the Proton acceptor. The interval 298–360 is disordered; the sequence is EARNPAPSSN…AHSCQEPPKA (63 aa). Acidic residues predominate over residues 313–343; it reads DDDEEDVEDEVEEEEEEEEEEEEEEEEEEDE. A compositionally biased stretch (basic and acidic residues) spans 344–360; sequence YEKHVKEAHSCQEPPKA.

The protein belongs to the protein kinase superfamily. Ser/Thr protein kinase family. As to expression, expressed in seedlings.

The catalysed reaction is L-seryl-[protein] + ATP = O-phospho-L-seryl-[protein] + ADP + H(+). It catalyses the reaction L-threonyl-[protein] + ATP = O-phospho-L-threonyl-[protein] + ADP + H(+). In Arabidopsis thaliana (Mouse-ear cress), this protein is Serine/threonine-protein kinase SRK2H (SRK2H).